A 747-amino-acid polypeptide reads, in one-letter code: E3 UFM1-protein ligase 1 homolog (747 aa).

The disordered stretch occupies residues 403 to 468 (EKKKQCGSKA…GTVQVNSEEL (66 aa)). Basic residues predominate over residues 429-438 (GGKGGKKGGK). The span at 439-449 (GGKNGGGGGKG) shows a compositional bias: gly residues. Over residues 450 to 465 (ATSSVPTGSGTVQVNS) the composition is skewed to polar residues.

It belongs to the UFL1 family.

Its function is as follows. E3 UFM1-protein ligase that mediates ufmylation of target proteins. This Caenorhabditis briggsae protein is E3 UFM1-protein ligase 1 homolog (ufl-1).